The chain runs to 279 residues: Pantothenate synthetase (279 aa).

26-33 (MGNLHEGH) provides a ligand contact to ATP. Catalysis depends on His-33, which acts as the Proton donor. Gln-57 is a binding site for (R)-pantoate. Gln-57 is a binding site for beta-alanine. 144–147 (GKKD) provides a ligand contact to ATP. Residue Gln-150 coordinates (R)-pantoate. ATP contacts are provided by residues Val-173 and 181–184 (LSSR).

Belongs to the pantothenate synthetase family. As to quaternary structure, homodimer.

It is found in the cytoplasm. It carries out the reaction (R)-pantoate + beta-alanine + ATP = (R)-pantothenate + AMP + diphosphate + H(+). It participates in cofactor biosynthesis; (R)-pantothenate biosynthesis; (R)-pantothenate from (R)-pantoate and beta-alanine: step 1/1. Catalyzes the condensation of pantoate with beta-alanine in an ATP-dependent reaction via a pantoyl-adenylate intermediate. The protein is Pantothenate synthetase of Burkholderia vietnamiensis (strain G4 / LMG 22486) (Burkholderia cepacia (strain R1808)).